We begin with the raw amino-acid sequence, 66 residues long: DNA-directed RNA polymerase subunit Rpo10 (66 aa).

4 residues coordinate Zn(2+): C7, C10, C47, and C48.

It belongs to the archaeal Rpo10/eukaryotic RPB10 RNA polymerase subunit family. In terms of assembly, part of the RNA polymerase complex. Requires Zn(2+) as cofactor.

It localises to the cytoplasm. The catalysed reaction is RNA(n) + a ribonucleoside 5'-triphosphate = RNA(n+1) + diphosphate. DNA-dependent RNA polymerase (RNAP) catalyzes the transcription of DNA into RNA using the four ribonucleoside triphosphates as substrates. This is DNA-directed RNA polymerase subunit Rpo10 from Halobacterium salinarum (strain ATCC 29341 / DSM 671 / R1).